The sequence spans 327 residues: Malate dehydrogenase (327 aa).

11 to 17 (GAAGQIA) contacts NAD(+). Residues Arg-92 and Arg-98 each contribute to the substrate site. Residues Asn-105, Gln-112, and 128-130 (VGN) contribute to the NAD(+) site. Substrate-binding residues include Asn-130 and Arg-160. His-185 (proton acceptor) is an active-site residue.

This sequence belongs to the LDH/MDH superfamily. MDH type 2 family.

It carries out the reaction (S)-malate + NAD(+) = oxaloacetate + NADH + H(+). In terms of biological role, catalyzes the reversible oxidation of malate to oxaloacetate. This is Malate dehydrogenase from Magnetococcus marinus (strain ATCC BAA-1437 / JCM 17883 / MC-1).